We begin with the raw amino-acid sequence, 463 residues long: MKRALERLRQLPRANERFNIFNSVNLSAAQQVMPSEKPLGNLVVGIKDNIVTKKLPTTCSSGVLAGYMSPYDATVVELLDEAGAVTAGKTNMDEFGMGSGGIHSFFGPTLNPAFPERPTVAGGSSSGSAAAVAAGVVDFALGTDTGGSVRMPAAYTSTVGFKPSYGRVSRHGVIAYAQSLDTVGIGARDVGLVRRVFEVLDRHDPKDPTSLPDELRQQAAALRREKKHLKIGIPAELLHGSVAAEIRERLLVVLDKLQAQGHELYPVSVPAVKNSLLVYYMLAPAEAASNLARYDGIRYGCRDEDLDMSDEVLFAPTRGKFGKEVKNRIVLGNYNLCSGAFKNNYMKAQKLRVELINQFDSIFAFENICTGNKPNPAGVDVLLSLTCMAPPPSLEAFTSKENKSPVNSYINDVFTVPMSLAGLPCISVPLAGMKGVGIQLTAQFADDYGLLDAAEDVMQEQLN.

Active-site charge relay system residues include Lys47 and Ser124. Residue Ser148 is the Acyl-ester intermediate of the active site.

It belongs to the amidase family. GatA subfamily. As to quaternary structure, subunit of the heterotrimeric GatFAB amidotransferase (AdT) complex, composed of A, B and F subunits.

Its subcellular location is the mitochondrion. It catalyses the reaction L-glutamyl-tRNA(Gln) + L-glutamine + ATP + H2O = L-glutaminyl-tRNA(Gln) + L-glutamate + ADP + phosphate + H(+). In terms of biological role, allows the formation of correctly charged Gln-tRNA(Gln) through the transamidation of misacylated Glu-tRNA(Gln) in the mitochondria. The reaction takes place in the presence of glutamine and ATP through an activated gamma-phospho-Glu-tRNA(Gln). This chain is Glutamyl-tRNA(Gln) amidotransferase subunit A, mitochondrial, found in Eremothecium gossypii (strain ATCC 10895 / CBS 109.51 / FGSC 9923 / NRRL Y-1056) (Yeast).